We begin with the raw amino-acid sequence, 252 residues long: MDNVKLVKNGVLRLPPGFRFHPTDEELVVQYLKRKVCSSPLPASIIPEFDVCRADPWDLPGNLEKERYFFSTREAKYPNGNRSNRATGSGYWKATGIDKRVVTSRGNQIVGLKKTLVFYKGKPPHGSRTDWIMHEYRLSSSPPSSMGPTQNWVLCRIFLKKRAGNKNDDDDGDSRNLRHNNNNNSSDQIEIITTDQTDDKTKPIFFDFMRKERTTDLNLLPSSPSSDHASSGVTTEIFSSSDEETSSCNSFR.

The 147-residue stretch at 14 to 160 (LPPGFRFHPT…NWVLCRIFLK (147 aa)) folds into the NAC domain. A DNA-binding region spans residues 110-166 (VGLKKTLVFYKGKPPHGSRTDWIMHEYRLSSSPPSSMGPTQNWVLCRIFLKKRAGNK). 2 disordered regions span residues 165–194 (NKNDDDDGDSRNLRHNNNNNSSDQIEIITT) and 217–252 (LNLLPSSPSSDHASSGVTTEIFSSSDEETSSCNSFR). Low complexity-rich tracts occupy residues 180 to 194 (NNNNNSSDQIEIITT) and 219 to 252 (LLPSSPSSDHASSGVTTEIFSSSDEETSSCNSFR). The tract at residues 213–226 (RTTDLNLLPSSPSS) is PEST-like.

Interacts with NAC007/VND4, NAC026/VND5 and NAC030/VND7. Interacts with the mungbean yellow mosaic virus (MYMV) AC1 replication-associated protein. Expressed in xylem and phloem cells in roots and inflorescence stems. Highly expressed in senescent leaves. Expressed in roots, and abscission and dehiscence tissues, such as axils of bracts and abscission zones in cauline leaves and siliques.

Its subcellular location is the nucleus. In terms of biological role, transcriptional repressor that negatively regulates the expression of genes involved in xylem vessel formation. Represses the transcriptional activation activity of NAC030/VND7, which regulates protoxylem vessel differentiation by promoting immature xylem vessel-specific genes expression. Transcriptional activator that regulates the COLD-REGULATED (COR15A and COR15B) and RESPONSIVE TO DEHYDRATION (LTI78/RD29A and LTI65/RD29B) genes by binding directly to their promoters. Mediates signaling crosstalk between salt stress response and leaf aging process. May play a role in DNA replication of mungbean yellow mosaic virus. The sequence is that of NAC domain-containing protein 83 from Arabidopsis thaliana (Mouse-ear cress).